Reading from the N-terminus, the 874-residue chain is DNA mismatch repair protein MutS (874 aa).

Residue Gly-613 to Ser-620 participates in ATP binding. Residues Glu-799–Thr-820 are disordered.

Belongs to the DNA mismatch repair MutS family.

Functionally, this protein is involved in the repair of mismatches in DNA. It is possible that it carries out the mismatch recognition step. This protein has a weak ATPase activity. This chain is DNA mismatch repair protein MutS, found in Marinobacter nauticus (strain ATCC 700491 / DSM 11845 / VT8) (Marinobacter aquaeolei).